Reading from the N-terminus, the 342-residue chain is Fatty acid desaturase 6 (342 aa).

2 helical membrane-spanning segments follow: residues 39 to 59 (GVDC…FLCL) and 63 to 83 (SPLV…TLTV). The Histidine box-1 motif lies at 87-91 (HLATH). Residues 124–128 (HVKMH) carry the Histidine box-2 motif. 2 consecutive transmembrane segments (helical) span residues 151–171 (YVYM…VAVE) and 185–205 (LGLI…VSGF). Residues 277-281 (HVEHH) carry the Histidine box-3 motif.

It belongs to the fatty acid desaturase type 1 family.

It is found in the membrane. It functions in the pathway lipid metabolism; fatty acid metabolism. This Bos taurus (Bovine) protein is Fatty acid desaturase 6 (FADS6).